The sequence spans 223 residues: UPF0173 metal-dependent hydrolase THA_544 (223 aa).

This sequence belongs to the UPF0173 family.

The protein is UPF0173 metal-dependent hydrolase THA_544 of Thermosipho africanus (strain TCF52B).